We begin with the raw amino-acid sequence, 131 residues long: CDGSH iron-sulfur domain-containing protein 2 homolog A (131 aa).

The Lumenal portion of the chain corresponds to 1–35; sequence MEFLSKIVRVHIPDYLNSVPVPDSFGGFLDLTAGQ. The helical transmembrane segment at 36–58 threads the bilayer; that stretch reads WLHLFAFSGTVAAAVYMSVKPYL. At 59-131 the chain is on the cytoplasmic side; it reads DKKDQKDQLV…GPLVLKRKDV (73 aa). [2Fe-2S] cluster is bound by residues C95, C97, C106, and H110.

The protein belongs to the CISD protein family. CISD2 subfamily. Requires [2Fe-2S] cluster as cofactor.

Its subcellular location is the endoplasmic reticulum membrane. The protein is CDGSH iron-sulfur domain-containing protein 2 homolog A of Branchiostoma floridae (Florida lancelet).